Consider the following 386-residue polypeptide: Phosphoglycerate kinase (386 aa).

Substrate contacts are provided by residues 21–23 (DLN), arginine 36, 59–62 (HLGR), arginine 113, and arginine 146. ATP contacts are provided by residues lysine 197, glutamate 314, and 340-343 (GGDT).

This sequence belongs to the phosphoglycerate kinase family. In terms of assembly, monomer.

Its subcellular location is the cytoplasm. It carries out the reaction (2R)-3-phosphoglycerate + ATP = (2R)-3-phospho-glyceroyl phosphate + ADP. The protein operates within carbohydrate degradation; glycolysis; pyruvate from D-glyceraldehyde 3-phosphate: step 2/5. In Vibrio vulnificus (strain CMCP6), this protein is Phosphoglycerate kinase.